Here is a 267-residue protein sequence, read N- to C-terminus: L-aspartate dehydrogenase (267 aa).

NAD(+)-binding residues include Ala-124 and Asn-190. His-218 is an active-site residue.

The protein belongs to the L-aspartate dehydrogenase family.

It carries out the reaction L-aspartate + NADP(+) + H2O = oxaloacetate + NH4(+) + NADPH + H(+). The enzyme catalyses L-aspartate + NAD(+) + H2O = oxaloacetate + NH4(+) + NADH + H(+). The protein operates within cofactor biosynthesis; NAD(+) biosynthesis; iminoaspartate from L-aspartate (dehydrogenase route): step 1/1. Specifically catalyzes the NAD or NADP-dependent dehydrogenation of L-aspartate to iminoaspartate. The sequence is that of L-aspartate dehydrogenase from Methanocaldococcus jannaschii (strain ATCC 43067 / DSM 2661 / JAL-1 / JCM 10045 / NBRC 100440) (Methanococcus jannaschii).